Reading from the N-terminus, the 525-residue chain is Glutamyl-tRNA(Gln) amidotransferase subunit A, mitochondrial (525 aa).

Catalysis depends on charge relay system residues lysine 76 and serine 168. The Acyl-ester intermediate role is filled by serine 192.

It belongs to the amidase family. GatA subfamily. Subunit of the heterotrimeric GatCAB amidotransferase (AdT) complex, composed of A (QRSL1), B (GATB) and C (GATC) subunits.

The protein resides in the mitochondrion. It carries out the reaction L-glutamyl-tRNA(Gln) + L-glutamine + ATP + H2O = L-glutaminyl-tRNA(Gln) + L-glutamate + ADP + phosphate + H(+). Its function is as follows. Allows the formation of correctly charged Gln-tRNA(Gln) through the transamidation of misacylated Glu-tRNA(Gln) in the mitochondria. The reaction takes place in the presence of glutamine and ATP through an activated gamma-phospho-Glu-tRNA(Gln). The protein is Glutamyl-tRNA(Gln) amidotransferase subunit A, mitochondrial (Qrsl1) of Rattus norvegicus (Rat).